Consider the following 268-residue polypeptide: uncharacterized protein (268 aa).

Helical transmembrane passes span 32–52 (SLLL…IFFI), 70–90 (VFVG…AFLF), 125–145 (GVSS…FYIF), and 237–257 (IKYI…AYLT).

Belongs to the CbiQ family.

The protein resides in the cell membrane. This is an uncharacterized protein from Methanocaldococcus jannaschii (strain ATCC 43067 / DSM 2661 / JAL-1 / JCM 10045 / NBRC 100440) (Methanococcus jannaschii).